The primary structure comprises 391 residues: Eukaryotic initiation factor 4A-3 (391 aa).

The Q motif signature appears at 18–46; sequence ASFAEMGIKDDLLRGVYQYGFEKPSAIQQ. The 171-residue stretch at 49–219 folds into the Helicase ATP-binding domain; the sequence is VLPIISGRDV…SKFMTDPVRI (171 aa). Residue 62–69 coordinates ATP; the sequence is AQSGTGKT. Residues 167 to 170 carry the DEAD box motif; it reads DESD. The Helicase C-terminal domain maps to 230-391; that stretch reads GIKQFFVAVE…EMPMNVADLI (162 aa).

Belongs to the DEAD box helicase family. eIF4A subfamily. In terms of assembly, eIF4F is a multi-subunit complex, the composition of which varies with external and internal environmental conditions. It is composed of at least EIF4A, EIF4E and EIF4G.

The catalysed reaction is ATP + H2O = ADP + phosphate + H(+). Its function is as follows. ATP-dependent RNA helicase which is a subunit of the eIF4F complex involved in cap recognition and is required for mRNA binding to ribosome. In the current model of translation initiation, eIF4A unwinds RNA secondary structures in the 5'-UTR of mRNAs which is necessary to allow efficient binding of the small ribosomal subunit, and subsequent scanning for the initiator codon. This chain is Eukaryotic initiation factor 4A-3, found in Nicotiana plumbaginifolia (Leadwort-leaved tobacco).